The primary structure comprises 369 residues: Tetraacyldisaccharide 4'-kinase (369 aa).

Residue 52-59 coordinates ATP; sequence TVGGTGKT.

This sequence belongs to the LpxK family.

It catalyses the reaction a lipid A disaccharide + ATP = a lipid IVA + ADP + H(+). It participates in glycolipid biosynthesis; lipid IV(A) biosynthesis; lipid IV(A) from (3R)-3-hydroxytetradecanoyl-[acyl-carrier-protein] and UDP-N-acetyl-alpha-D-glucosamine: step 6/6. In terms of biological role, transfers the gamma-phosphate of ATP to the 4'-position of a tetraacyldisaccharide 1-phosphate intermediate (termed DS-1-P) to form tetraacyldisaccharide 1,4'-bis-phosphate (lipid IVA). The chain is Tetraacyldisaccharide 4'-kinase from Parabacteroides distasonis (strain ATCC 8503 / DSM 20701 / CIP 104284 / JCM 5825 / NCTC 11152).